A 199-amino-acid polypeptide reads, in one-letter code: Ribonuclease HII (199 aa).

Positions 10–199 (HLVAGVDEVG…VKRALGLASN (190 aa)) constitute an RNase H type-2 domain. A divalent metal cation-binding residues include Asp-16, Glu-17, and Asp-108.

The protein belongs to the RNase HII family. It depends on Mn(2+) as a cofactor. The cofactor is Mg(2+).

The protein resides in the cytoplasm. It carries out the reaction Endonucleolytic cleavage to 5'-phosphomonoester.. Its function is as follows. Endonuclease that specifically degrades the RNA of RNA-DNA hybrids. This Klebsiella pneumoniae subsp. pneumoniae (strain ATCC 700721 / MGH 78578) protein is Ribonuclease HII.